The sequence spans 306 residues: Recombination-associated protein RdgC (306 aa).

It belongs to the RdgC family.

It is found in the cytoplasm. The protein resides in the nucleoid. In terms of biological role, may be involved in recombination. The sequence is that of Recombination-associated protein RdgC from Pseudomonas entomophila (strain L48).